A 1045-amino-acid polypeptide reads, in one-letter code: Protein phosphatase Slingshot (1045 aa).

The segment covering 1–20 has biased composition (polar residues); sequence MALVTVQRSPSVAGSCSNSD. Disordered regions lie at residues 1–35, 58–80, 143–194, and 306–325; these read MALV…GNDR, TQSE…SNNS, KVGG…DNKN, and ESRR…EKEE. A compositionally biased stretch (low complexity) spans 66–80; the sequence is TDSTRSSNSTQSNNS. A compositionally biased stretch (polar residues) spans 149-174; sequence GTKSSTSPAVPTQRQLSVEQTATEAS. Residues 175 to 185 are compositionally biased toward basic and acidic residues; sequence SKCDKTADKEN. The region spanning 324–379 is the DEK-C domain; it reads EETESVIKMKLKAIMMSVDLDEVTSKYIRGRLEEILDMDLGEYKSFIDAEMLVILG. The 142-residue stretch at 383–524 folds into the Tyrosine-protein phosphatase domain; sequence APTKIFEHVY…LETYSGMLDA (142 aa). Residue C468 is the Phosphocysteine intermediate of the active site. Positions 529 to 547 are enriched in basic and acidic residues; it reads EKLQRSKSETNLKSTKDAR. Disordered stretches follow at residues 529-631, 699-799, and 1001-1045; these read EKLQ…PERS, SHLG…GDNR, and ACSA…SDSS. Residues 560–569 are compositionally biased toward polar residues; it reads ALNQAKSKST. Residues 586–601 show a composition bias toward basic residues; that stretch reads MHRRSIAQKSQRRMVR. Residues 602–625 show a composition bias toward polar residues; that stretch reads RSSSTSPKTQTAVVTKQQSQSMEN. The span at 704-713 shows a compositional bias: low complexity; sequence SVSGSSSGNI. S719 carries the post-translational modification Phosphoserine. Low complexity predominate over residues 721–732; it reads CSDVFSSQVDSV. 2 stretches are compositionally biased toward polar residues: residues 764–774 and 1008–1021; these read TPQQQKQQSNA and KKTT…SSPV. A compositionally biased stretch (low complexity) spans 1029 to 1045; it reads SAASNSNSSASNSSDSS.

The protein belongs to the protein-tyrosine phosphatase family. As to quaternary structure, interacts with actin.

Its subcellular location is the cytoplasm. It localises to the cytoskeleton. The catalysed reaction is O-phospho-L-tyrosyl-[protein] + H2O = L-tyrosyl-[protein] + phosphate. It catalyses the reaction O-phospho-L-seryl-[protein] + H2O = L-seryl-[protein] + phosphate. It carries out the reaction O-phospho-L-threonyl-[protein] + H2O = L-threonyl-[protein] + phosphate. Protein phosphatase which regulates actin filament dynamics. Dephosphorylates and activates the actin binding/depolymerizing factor tsr/cofilin, which subsequently binds to actin filaments and stimulates their disassembly. Required for axon growth. This Drosophila melanogaster (Fruit fly) protein is Protein phosphatase Slingshot (ssh).